Consider the following 293-residue polypeptide: Sodium-type flagellar protein MotY (293 aa).

Residues methionine 1–alanine 21 form the signal peptide. One can recognise an OmpA-like domain in the interval tyrosine 175 to glutamine 292.

The protein resides in the cell membrane. In terms of biological role, may play the role of a stator in the sodium flagellar motor, stabilizing the force-generating unit through direct interaction with the cell wall. In Vibrio parahaemolyticus serotype O3:K6 (strain RIMD 2210633), this protein is Sodium-type flagellar protein MotY.